A 365-amino-acid polypeptide reads, in one-letter code: Sulfate/thiosulfate import ATP-binding protein CysA (365 aa).

One can recognise an ABC transporter domain in the interval 3–237; that stretch reads IEIANIKKSF…PATRFVLEFM (235 aa). An ATP-binding site is contributed by 35 to 42; the sequence is GPSGSGKT.

This sequence belongs to the ABC transporter superfamily. Sulfate/tungstate importer (TC 3.A.1.6) family. In terms of assembly, the complex is composed of two ATP-binding proteins (CysA), two transmembrane proteins (CysT and CysW) and a solute-binding protein (CysP).

The protein localises to the cell inner membrane. The catalysed reaction is sulfate(out) + ATP + H2O = sulfate(in) + ADP + phosphate + H(+). It carries out the reaction thiosulfate(out) + ATP + H2O = thiosulfate(in) + ADP + phosphate + H(+). Its function is as follows. Part of the ABC transporter complex CysAWTP involved in sulfate/thiosulfate import. Responsible for energy coupling to the transport system. This chain is Sulfate/thiosulfate import ATP-binding protein CysA, found in Escherichia coli O157:H7.